A 477-amino-acid chain; its full sequence is Homeobox protein Meis2 (477 aa).

The segment at 71-191 is required for interaction with PBX1; sequence DALKRDKDAI…KMPIDLVIDE (121 aa). One can recognise an MEIS N-terminal domain in the interval 110-193; that stretch reads GGDVCSSDSF…PIDLVIDERD (84 aa). Basic and acidic residues predominate over residues 193–203; it reads DGSSKSDHEEL. The interval 193–283 is disordered; that stretch reads DGSSKSDHEE…KKRQKKRGIF (91 aa). 2 stretches are compositionally biased toward polar residues: residues 204 to 217 and 239 to 251; these read SGSS…NPSS and GHAS…SSEQ. Residues 276–338 constitute a DNA-binding region (homeobox; TALE-type); it reads RQKKRGIFPK…NARRRIVQPM (63 aa). The segment at 299–333 is interaction with DNA; sequence LTHPYPSEEQKKQLAQDTGLTILQVNNWFINARRR. The interval 340-477 is transcriptional activation domain; sequence DQSNRAGFLL…GGQVMDIHAQ (138 aa).

This sequence belongs to the TALE/MEIS homeobox family. Monomer and homodimer. Heterodimer with HOXB13. Isoform 2 interacts with TLX1. Isoform 3 interacts with HOXA13 and PBX1 isoform PBX1b. Isoform 4 interacts with SP1, SP3 and KLF4. Isoform 4 and isoform 5 interact with PBX1 isoform PBX1a; the interaction partially relieves MEIS2 autoinhibition. Isoform 3 also known as MEIS2b is part of a PDX1:PBX1b:Meis2B complex; Meis2B is recruited by PBX1b and can be replaced by isoform 4 in a small fraction of complexes. Can form trimeric complexes including HOXB8 and PBX2 or PBX3. Expressed in various tissues. Expressed at high level in the lymphoid organs of hematopoietic tissues. Also expressed in some regions of the brain, such as the putamen.

It is found in the nucleus. The protein localises to the cytoplasm. The protein resides in the perinuclear region. Functionally, involved in transcriptional regulation. Binds to HOX or PBX proteins to form dimers, or to a DNA-bound dimer of PBX and HOX proteins and thought to have a role in stabilization of the homeoprotein-DNA complex. Isoform 3 is required for the activity of a PDX1:PBX1b:MEIS2b complex in pancreatic acinar cells involved in the transcriptional activation of the ELA1 enhancer; the complex binds to the enhancer B element and cooperates with the transcription factor 1 complex (PTF1) bound to the enhancer A element; MEIS2 is not involved in complex DNA-binding. Probably in complex with PBX1, is involved in transcriptional regulation by KLF4. Isoform 3 and isoform 4 can bind to a EPHA8 promoter sequence containing the DNA motif 5'-CGGTCA-3'; in cooperation with a PBX protein (such as PBX2) is proposed to be involved in the transcriptional activation of EPHA8 in the developing midbrain. May be involved in regulation of myeloid differentiation. Can bind to the DNA sequence 5'-TGACAG-3'in the activator ACT sequence of the D(1A) dopamine receptor (DRD1) promoter and activate DRD1 transcription; isoform 5 cannot activate DRD1 transcription. The sequence is that of Homeobox protein Meis2 (MEIS2) from Homo sapiens (Human).